The following is a 386-amino-acid chain: Adiponectin receptor protein 2 (386 aa).

Positions 1–71 (MNEPTENRLG…HEYSDEAPQE (71 aa)) are disordered. The Cytoplasmic portion of the chain corresponds to 1–147 (MNEPTENRLG…SIFRIHTETG (147 aa)). The segment covering 15–41 (PEPDIRLRKGHQLDGTRRGDNDSHQGD) has biased composition (basic and acidic residues). Residues 148–168 (NIWTHLLGCVFFLCLGIFYMF) traverse the membrane as a helical segment. Residues 169 to 181 (RPNISFVAPLQEK) lie on the Extracellular side of the membrane. A helical membrane pass occupies residues 182–202 (VVFGLFFLGAILCLSFSWLFH). Residue histidine 202 coordinates Zn(2+). The Cytoplasmic segment spans residues 203–213 (TVYCHSEGVSR). Residues 214-234 (LFSKLDYSGIALLIMGSFVPW) form a helical membrane-spanning segment. At 235–245 (LYYSFYCNPQP) the chain is on the extracellular side. Residues 246–266 (CFIYLIVICVLGIAAIIVSQW) traverse the membrane as a helical segment. At 267 to 273 (DMFATPQ) the chain is on the cytoplasmic side. Residues 274-294 (YRGVRAGVFLGLGLSGIIPTL) traverse the membrane as a helical segment. At 295-309 (HYVISEGFLKAATIG) the chain is on the extracellular side. The helical transmembrane segment at 310–330 (QIGWLMLMASLYITGAALYAA) threads the bilayer. The Cytoplasmic segment spans residues 331-348 (RIPERFFPGKCDIWFHSH). Residues histidine 348 and histidine 352 each coordinate Zn(2+). The chain crosses the membrane as a helical span at residues 349–369 (QLFHIFVVAGAFVHFHGVSNL). Over 370–386 (QEFRFMIGGGCSEEDAL) the chain is Extracellular.

It belongs to the ADIPOR family. As to quaternary structure, may form homooligomers and heterooligomers with ADIPOR1. Interacts with APPL2 (via BAR domain); ADIPOQ dissociates this interaction. In terms of tissue distribution, ubiquitous. Highly expressed in skeletal muscle, liver and placenta. Weakly expressed in brain, heart, colon, spleen, kidney, thymus, small intestine, peripheral blood leukocytes and lung.

The protein localises to the cell membrane. Its function is as follows. Receptor for ADIPOQ, an essential hormone secreted by adipocytes that regulates glucose and lipid metabolism. Required for normal body fat and glucose homeostasis. ADIPOQ-binding activates a signaling cascade that leads to increased PPARA activity, and ultimately to increased fatty acid oxidation and glucose uptake. Has intermediate affinity for globular and full-length adiponectin. Required for normal revascularization after chronic ischemia caused by severing of blood vessels. The sequence is that of Adiponectin receptor protein 2 from Homo sapiens (Human).